The following is a 415-amino-acid chain: Zona pellucida-like domain-containing protein 1 (415 aa).

Residues 1–19 (MEQIRLLLLLTIRVLSGSA) form the signal peptide. The Extracellular segment spans residues 20–372 (QFNGYNCDAN…PPFQLNAITS (353 aa)). The ZP domain occupies 43-320 (YCGVQAITMK…PICSHRERRD (278 aa)). 2 cysteine pairs are disulfide-bonded: Cys-44/Cys-155 and Cys-79/Cys-104. Asn-164 carries an N-linked (GlcNAc...) asparagine glycan. 2 cysteine pairs are disulfide-bonded: Cys-235–Cys-296 and Cys-255–Cys-313. Positions 323–359 (RRTTWSSQSSSGSAVLSAGPIITRSDETPTNNSQLGS) are disordered. Over residues 328–339 (SSQSSSGSAVLS) the composition is skewed to low complexity. Residues 350-359 (TPTNNSQLGS) show a composition bias toward polar residues. The chain crosses the membrane as a helical span at residues 373-393 (ALISGMVILGVMSFSLLVCPL). The Cytoplasmic portion of the chain corresponds to 394 to 415 (ALLHRKGPTSLVLNGIRNPVFD).

Post-translationally, proteolytically cleaved before the transmembrane segment to yield the secreted form found in the extracellular matrix of the cupula.

The protein localises to the cytoplasmic vesicle membrane. Its subcellular location is the secreted. It localises to the extracellular space. The protein resides in the extracellular matrix. Glycoprotein which is a component of the gelatinous extracellular matrix in the cupulae of the vestibular organ. The sequence is that of Zona pellucida-like domain-containing protein 1 (ZPLD1) from Macaca fascicularis (Crab-eating macaque).